Reading from the N-terminus, the 161-residue chain is Lipid droplet assembly factor 1 (161 aa).

The Cytoplasmic portion of the chain corresponds to 1–43 (MAEEEPSSVSRDLQELQRKLGLLLESFQNNSKVVAFMKSPVGR). A helical membrane pass occupies residues 44-61 (FLDRHPFLVLTVLMFVTM). Topologically, residues 62–67 (SAIPVG) are lumenal. The helical transmembrane segment at 68–87 (FFLLIVVLTSLGALMGAILL) threads the bilayer. At 88-93 (EGLVIS) the chain is on the cytoplasmic side. The helical transmembrane segment at 94–110 (VCGLSLLCILCGLGFVS) threads the bilayer. Over 111–116 (LALSGI) the chain is Lumenal. Residues 117–133 (TMMSYVVVSCLMSYWFS) form a helical membrane-spanning segment. Residues 134–161 (PSRPPTQQHANIDSQLAMKFTESEKLGL) are Cytoplasmic-facing.

The protein belongs to the LDAF1 family. In terms of assembly, interacts with BSCL2/seipin to form an oligomeric complex.

The protein localises to the endoplasmic reticulum membrane. Its subcellular location is the lipid droplet. Its function is as follows. Plays an important role in the formation of lipid droplets (LD) which are storage organelles at the center of lipid and energy homeostasis. In association with BSCL2/seipin, defines the sites of LD formation in the endoplasmic reticulum. This Rattus norvegicus (Rat) protein is Lipid droplet assembly factor 1.